Consider the following 139-residue polypeptide: uncharacterized protein (139 aa).

Residues Tyr-77–Ala-97 form a helical membrane-spanning segment.

The protein localises to the mitochondrion membrane. This is an uncharacterized protein from Arabidopsis thaliana (Mouse-ear cress).